We begin with the raw amino-acid sequence, 452 residues long: tRNA(Ile)-lysidine synthase (452 aa).

An ATP-binding site is contributed by 27 to 32; it reads SGGIDS.

Belongs to the tRNA(Ile)-lysidine synthase family.

It localises to the cytoplasm. The enzyme catalyses cytidine(34) in tRNA(Ile2) + L-lysine + ATP = lysidine(34) in tRNA(Ile2) + AMP + diphosphate + H(+). Its function is as follows. Ligates lysine onto the cytidine present at position 34 of the AUA codon-specific tRNA(Ile) that contains the anticodon CAU, in an ATP-dependent manner. Cytidine is converted to lysidine, thus changing the amino acid specificity of the tRNA from methionine to isoleucine. This is tRNA(Ile)-lysidine synthase from Persephonella marina (strain DSM 14350 / EX-H1).